The primary structure comprises 190 residues: MSKPTREEATEAVRTLLKFIGEDPTREGLLKTPDRVINSYTEIFSGYGKDVEEILNTKFYDTCNFQDFISLEGIKFTSFCEHHMLPFNGTVHIAYIPDNCIVGISKLARIVNIFAKRLQIQEKMTVQIAESVQENLKPLGVAVKIAALHSCMSMRGVMQDHSIMNTMHYTGIFAEQQKYRHEFLNLTTKR.

Zn(2+) contacts are provided by C80, H83, and C151.

The protein belongs to the GTP cyclohydrolase I family. In terms of assembly, toroid-shaped homodecamer, composed of two pentamers of five dimers.

The catalysed reaction is GTP + H2O = 7,8-dihydroneopterin 3'-triphosphate + formate + H(+). It participates in cofactor biosynthesis; 7,8-dihydroneopterin triphosphate biosynthesis; 7,8-dihydroneopterin triphosphate from GTP: step 1/1. The protein is GTP cyclohydrolase 1 of Rickettsia akari (strain Hartford).